Consider the following 392-residue polypeptide: Zinc finger protein CONSTANS-LIKE 7 (392 aa).

Zn(2+) contacts are provided by Cys-22, Cys-25, Cys-46, and His-51. The segment at 22-65 adopts a B box-type; atypical zinc-finger fold; that stretch reads CDACMKRSRASWYCPADDAFLCQSCDASIHSANHLAKRHERVRL. A coiled-coil region spans residues 226 to 254; the sequence is KEENKVGFEINCKDLKRVKDEDEEEEEAK. Disordered regions lie at residues 246–271 and 326–346; these read EDEE…SNDK and SDGS…GERE. Positions 259–271 are enriched in basic and acidic residues; it reads GSKDSDREASNDK. In terms of domain architecture, CCT spans 345–387; sequence REARVLRYKEKRRTRLFSKKIRYEVRKLNAEQRPRIKGRFVKR.

The protein belongs to the CONSTANS family.

The protein resides in the nucleus. This is Zinc finger protein CONSTANS-LIKE 7 (COL7) from Arabidopsis thaliana (Mouse-ear cress).